Consider the following 299-residue polypeptide: tRNA pseudouridine synthase B (299 aa).

Asp-39 (nucleophile) is an active-site residue.

The protein belongs to the pseudouridine synthase TruB family. Type 1 subfamily.

The catalysed reaction is uridine(55) in tRNA = pseudouridine(55) in tRNA. Responsible for synthesis of pseudouridine from uracil-55 in the psi GC loop of transfer RNAs. The chain is tRNA pseudouridine synthase B from Syntrophomonas wolfei subsp. wolfei (strain DSM 2245B / Goettingen).